Consider the following 408-residue polypeptide: Collagen and calcium-binding EGF domain-containing protein 1 (408 aa).

Residues 1 to 35 (MVPPPLPSRGGAAKRQLGKSLGPLLLLLALGHTWT) form the signal peptide. The 42-residue stretch at 135–176 (DIDECATSNTTLCAHICINTMGSYHCECREGYILEDDGRTCT) folds into the EGF-like; calcium-binding domain. 3 cysteine pairs are disulfide-bonded: Cys-139/Cys-151, Cys-147/Cys-160, and Cys-162/Cys-175. Residue Asn-143 is glycosylated (N-linked (GlcNAc...) asparagine). An N-linked (GlcNAc...) asparagine glycan is attached at Asn-183. Disordered stretches follow at residues 246–335 (YLPG…GPPG) and 361–408 (HRTH…NFYP). 2 Collagen-like domains span residues 247–292 (LPGP…PMGP) and 302–335 (GRRG…GPPG). Residues 272 to 281 (PGMPGPPGQP) are compositionally biased toward pro residues. Positions 283-294 (PRGSMGPMGPSP) are enriched in low complexity. Residues 325 to 334 (PGPPGSPGPP) show a composition bias toward pro residues. Ser-387 carries an O-linked (Xyl...) (chondroitin sulfate) serine glycan. Positions 390–402 (DYSRRTEARDPEA) are enriched in basic and acidic residues.

It belongs to the CCBE1 family.

It localises to the secreted. Required for lymphangioblast budding and angiogenic sprouting from venous endothelium during embryogenesis. This chain is Collagen and calcium-binding EGF domain-containing protein 1 (Ccbe1), found in Mus musculus (Mouse).